The chain runs to 368 residues: Phospho-N-acetylmuramoyl-pentapeptide-transferase (368 aa).

The next 10 helical transmembrane spans lie at 2 to 22, 51 to 71, 80 to 100, 116 to 136, 166 to 186, 193 to 213, 234 to 254, 256 to 276, 277 to 297, and 340 to 360; these read IALI…TPLL, TLGG…SALY, PTWA…LGFI, VGGK…LALI, IVAI…WTNA, LDGL…IIAM, PLDL…FLWY, CNPA…GLFA, ALSI…LFVV, and FWIV…GNWV.

It belongs to the glycosyltransferase 4 family. MraY subfamily. Mg(2+) serves as cofactor.

It localises to the cell membrane. The catalysed reaction is UDP-N-acetyl-alpha-D-muramoyl-L-alanyl-gamma-D-glutamyl-meso-2,6-diaminopimeloyl-D-alanyl-D-alanine + di-trans,octa-cis-undecaprenyl phosphate = di-trans,octa-cis-undecaprenyl diphospho-N-acetyl-alpha-D-muramoyl-L-alanyl-D-glutamyl-meso-2,6-diaminopimeloyl-D-alanyl-D-alanine + UMP. It participates in cell wall biogenesis; peptidoglycan biosynthesis. Functionally, catalyzes the initial step of the lipid cycle reactions in the biosynthesis of the cell wall peptidoglycan: transfers peptidoglycan precursor phospho-MurNAc-pentapeptide from UDP-MurNAc-pentapeptide onto the lipid carrier undecaprenyl phosphate, yielding undecaprenyl-pyrophosphoryl-MurNAc-pentapeptide, known as lipid I. This Bifidobacterium animalis subsp. lactis (strain AD011) protein is Phospho-N-acetylmuramoyl-pentapeptide-transferase.